A 202-amino-acid polypeptide reads, in one-letter code: uncharacterized protein (202 aa).

This is an uncharacterized protein from Dictyostelium discoideum (Social amoeba).